Consider the following 515-residue polypeptide: Cytochrome P450 76C3 (515 aa).

Residues 5-25 (LIQGMSLPLYFLLTLFFFFFA) form a helical membrane-spanning segment. A heme-binding site is contributed by C451.

Belongs to the cytochrome P450 family. Heme serves as cofactor.

Its subcellular location is the membrane. This is Cytochrome P450 76C3 (CYP76C3) from Arabidopsis thaliana (Mouse-ear cress).